Reading from the N-terminus, the 628-residue chain is tRNA uridine 5-carboxymethylaminomethyl modification enzyme MnmG (628 aa).

FAD contacts are provided by residues 14 to 19 (GAGHAG), Val-126, and Ser-181. 273–287 (GPRYCPSIEDKVVRF) provides a ligand contact to NAD(+). Gln-370 contributes to the FAD binding site.

It belongs to the MnmG family. As to quaternary structure, homodimer. Heterotetramer of two MnmE and two MnmG subunits. The cofactor is FAD.

It localises to the cytoplasm. NAD-binding protein involved in the addition of a carboxymethylaminomethyl (cmnm) group at the wobble position (U34) of certain tRNAs, forming tRNA-cmnm(5)s(2)U34. The sequence is that of tRNA uridine 5-carboxymethylaminomethyl modification enzyme MnmG from Bacillus subtilis (strain 168).